A 374-amino-acid polypeptide reads, in one-letter code: 5-hydroxytryptamine receptor 1D (374 aa).

N-linked (GlcNAc...) asparagine glycosylation is found at N5, N17, and N21. 3 helical membrane-spanning segments follow: residues 36 to 61 (ISLV…TTIL), 73 to 94 (LIGS…ISIA), and 107 to 131 (LCDI…VIAL). A disulfide bridge connects residues C108 and C185. Residues D115 and C119 each contribute to the serotonin site. A DRY motif; important for ligand-induced conformation changes motif is present at residues 132–134 (DRY). 4 helical membrane-spanning segments follow: residues 152-173 (AAAM…PLFW), 192-215 (ISYT…ILYG), 298-323 (KTLG…VLPI), and 333-356 (ALFD…YTVF). Serotonin is bound at residue S318. The short motif at 349-353 (NPVIY) is the NPxxY motif; important for ligand-induced conformation changes and signaling element.

The protein belongs to the G-protein coupled receptor 1 family. In terms of assembly, homodimer. Heterodimer with HTR1B. As to expression, detected in dorsal raphe.

It localises to the cell membrane. Its function is as follows. G-protein coupled receptor for 5-hydroxytryptamine (serotonin). Also functions as a receptor for ergot alkaloid derivatives, various anxiolytic and antidepressant drugs and other psychoactive substances. Ligand binding causes a conformation change that triggers signaling via guanine nucleotide-binding proteins (G proteins) and modulates the activity of downstream effectors, such as adenylate cyclase. HTR1D is coupled to G(i)/G(o) G alpha proteins and mediates inhibitory neurotransmission by inhibiting adenylate cyclase activity. Regulates the release of 5-hydroxytryptamine in the brain, and thereby affects neural activity. May also play a role in regulating the release of other neurotransmitters. May play a role in vasoconstriction. This Rattus norvegicus (Rat) protein is 5-hydroxytryptamine receptor 1D (Htr1d).